Consider the following 178-residue polypeptide: Bifunctional protein PyrR (178 aa).

Positions 99-111 match the PRPP-binding motif; the sequence is VVLVDDVIFKGRT.

It belongs to the purine/pyrimidine phosphoribosyltransferase family. PyrR subfamily.

It carries out the reaction UMP + diphosphate = 5-phospho-alpha-D-ribose 1-diphosphate + uracil. Functionally, regulates the transcription of the pyrimidine nucleotide (pyr) operon in response to exogenous pyrimidines. In terms of biological role, also displays a weak uracil phosphoribosyltransferase activity which is not physiologically significant. The sequence is that of Bifunctional protein PyrR from Nostoc punctiforme (strain ATCC 29133 / PCC 73102).